Consider the following 813-residue polypeptide: Histone acetyltransferase KAT2B (813 aa).

2 disordered regions span residues 1-55 and 380-423; these read MAEA…GGSA and NSTS…EAKR. Over residues 32–46 the composition is skewed to low complexity; that stretch reads ASCGPATAVAAAGTA. Over residues 380 to 391 the composition is skewed to polar residues; sequence NSTSHEQINGGR. The span at 406–423 shows a compositional bias: basic and acidic residues; sequence PGEKRKMNNSHAPEEAKR. Residues 484-632 enclose the N-acetyltransferase domain; that stretch reads LNQKPNKKIL…GATLMGCELN (149 aa). Glutamate 551 acts as the Proton donor/acceptor in catalysis. Residues 555–557, 562–568, and 593–596 each bind acetyl-CoA; these read CAV, QVKGYGT, and YAIG. The Bromo domain occupies 704–808; the sequence is KDPEQLYSTL…KFFFSKIKEA (105 aa).

This sequence belongs to the acetyltransferase family. GCN5 subfamily. In terms of assembly, interacts with BCAS3. Interacts with SIRT1. Interacts with EP300, CREBBP and DDX17. Component of a large chromatin remodeling complex, at least composed of MYSM1, KAT2B/PCAF, RBM10 and KIF11/TRIP5. Interacts with KLF1; the interaction does not acetylate KLF1 and there is no enhancement of its transactivational activity. Interacts with NFE4. Interacts with MECOM. Interacts with NR2C2 (hypophosphorylated and unsumoylated form); the interaction promotes the transactivation activity of NR2C2. Interacts with NFE4. Interacts with MECOM. Interacts with E2F1; the interaction acetylates E2F1 augmenting its DNA-binding and transcriptional activity. Interacts with NPAS2, BMAL1 and CLOCK. Interacts (unsumoylated form) with NR2C1; the interaction promotes transactivation activity. Interacts with CEBPB. Interacts with NR4A3. Interacts with TBX5. Interacts with PLK4. Interacts with RB1; this interaction leads to RB1 acetylation. Interacts with VRK1.

The protein localises to the nucleus. Its subcellular location is the cytoplasm. It localises to the cytoskeleton. The protein resides in the microtubule organizing center. It is found in the centrosome. It catalyses the reaction L-lysyl-[histone] + acetyl-CoA = N(6)-acetyl-L-lysyl-[histone] + CoA + H(+). The catalysed reaction is L-lysyl-[protein] + acetyl-CoA = N(6)-acetyl-L-lysyl-[protein] + CoA + H(+). The enzyme catalyses spermidine + acetyl-CoA = N(8)-acetylspermidine + CoA + H(+). In terms of biological role, functions as a histone acetyltransferase (HAT) to promote transcriptional activation. Has significant histone acetyltransferase activity with core histones (H3 and H4), and also with nucleosome core particles. Has a a strong preference for acetylation of H3 at 'Lys-9' (H3K9ac). Also acetylates non-histone proteins, such as ACLY, MAPRE1/EB1, PLK4, RRP9/U3-55K and TBX5. Acts as a circadian transcriptional coactivator which enhances the activity of the circadian transcriptional activators: NPAS2-BMAL1 and CLOCK-BMAL1 heterodimers. Involved in heart and limb development by mediating acetylation of TBX5, acetylation regulating nucleocytoplasmic shuttling of TBX5. Acts as a negative regulator of centrosome amplification by mediating acetylation of PLK4. Acetylates RRP9/U3-55K, a core subunit of the U3 snoRNP complex, impairing pre-rRNA processing. Acetylates MAPRE1/EB1, promoting dynamic kinetochore-microtubule interactions in early mitosis. Also acetylates spermidine. This Mus musculus (Mouse) protein is Histone acetyltransferase KAT2B.